A 463-amino-acid chain; its full sequence is MNWEVEVIRKKEDLIRDTQEFLRINSVMDETTAGPGKPFGEGVNASLTSLLELGEKEGFTTKNLDGFAGHIEWGEGDDIIGVLCHVDVVPPGDGWTSDPFSAEIRNGRIYARGAIDDKGPTMAAFYALKIVKDMNLPLSKRVRMIIGTDEESDWRCVEHYFKHEEMPTMGFAPDADFPIINAEKGIIDASLLIPHRPNQAEPKAVLVSFQSGLRLNMVPDAAEAVIEGPKNEEILSSFKDMLRTTDQKGEAAIENGQLILRMYGLSCHAMEPNNGINAGILLCEFLQQTELDDAGKRFVQVVTDKFSGDTRGKKLDIDCEDEISGELTLNVGTLRYKEGQGGELGINIRYPVTAESKVIRDTFESASEFELGEFKDSKPHHVSADHPLVKTLQKVYEGQLGKKADLISIGGGTYARSLKAGVAFGPLFPGRPDSAHQKDEYIEIDDLLRSTALYAQAIYELAK.

His-85 contributes to the Zn(2+) binding site. The active site involves Asp-87. Position 116 (Asp-116) interacts with Zn(2+). Residue Glu-150 is the Proton acceptor of the active site. Residues Glu-151, Asp-174, and His-436 each contribute to the Zn(2+) site.

Belongs to the peptidase M20A family. The cofactor is Zn(2+).

The sequence is that of Putative dipeptidase YtjP (ytjP) from Bacillus subtilis (strain 168).